Consider the following 205-residue polypeptide: uncharacterized protein (205 aa).

The HTH tetR-type domain maps to 11–71; sequence KTRRALVDAA…EMVDEAGLML (61 aa).

This is an uncharacterized protein from Haemophilus influenzae (strain ATCC 51907 / DSM 11121 / KW20 / Rd).